We begin with the raw amino-acid sequence, 509 residues long: UDP-N-acetylmuramoylalanine--D-glutamate ligase (509 aa).

116–122 (GTNGKST) provides a ligand contact to ATP.

This sequence belongs to the MurCDEF family.

It is found in the cytoplasm. It carries out the reaction UDP-N-acetyl-alpha-D-muramoyl-L-alanine + D-glutamate + ATP = UDP-N-acetyl-alpha-D-muramoyl-L-alanyl-D-glutamate + ADP + phosphate + H(+). The protein operates within cell wall biogenesis; peptidoglycan biosynthesis. Its function is as follows. Cell wall formation. Catalyzes the addition of glutamate to the nucleotide precursor UDP-N-acetylmuramoyl-L-alanine (UMA). The sequence is that of UDP-N-acetylmuramoylalanine--D-glutamate ligase from Wolbachia pipientis wMel.